Consider the following 132-residue polypeptide: Small ribosomal subunit protein uS8 (132 aa).

The protein belongs to the universal ribosomal protein uS8 family. As to quaternary structure, part of the 30S ribosomal subunit. Contacts proteins S5 and S12.

Its function is as follows. One of the primary rRNA binding proteins, it binds directly to 16S rRNA central domain where it helps coordinate assembly of the platform of the 30S subunit. This is Small ribosomal subunit protein uS8 from Paenarthrobacter aurescens (strain TC1).